A 787-amino-acid polypeptide reads, in one-letter code: Endonuclease MutS2 (787 aa).

336-343 provides a ligand contact to ATP; sequence GPNTGGKT. The Smr domain maps to 712 to 787; that stretch reads LDLRGVRYED…GNGATEVQFK (76 aa).

Belongs to the DNA mismatch repair MutS family. MutS2 subfamily. As to quaternary structure, homodimer. Binds to stalled ribosomes, contacting rRNA.

Endonuclease that is involved in the suppression of homologous recombination and thus may have a key role in the control of bacterial genetic diversity. Functionally, acts as a ribosome collision sensor, splitting the ribosome into its 2 subunits. Detects stalled/collided 70S ribosomes which it binds and splits by an ATP-hydrolysis driven conformational change. Acts upstream of the ribosome quality control system (RQC), a ribosome-associated complex that mediates the extraction of incompletely synthesized nascent chains from stalled ribosomes and their subsequent degradation. Probably generates substrates for RQC. This chain is Endonuclease MutS2, found in Lactiplantibacillus plantarum (strain ATCC BAA-793 / NCIMB 8826 / WCFS1) (Lactobacillus plantarum).